The primary structure comprises 430 residues: RNA pseudouridine synthase 2, chloroplastic (430 aa).

The N-terminal 43 residues, 1 to 43 (MLSISQLPSFSLTTAKSLRYPSSPSSSLSIFFSFFPKVSNFVR), are a transit peptide targeting the chloroplast. In terms of domain architecture, S4 RNA-binding spans 82 to 155 (IRLDSWISSR…IPLDIVYEDK (74 aa)). The segment at 195 to 222 (SNSEEDDDSDEETFSDDEEMTTSPSSYA) is disordered. Residues 196–214 (NSEEDDDSDEETFSDDEEM) are compositionally biased toward acidic residues. Asp234 is an active-site residue.

Belongs to the pseudouridine synthase RluA family.

It is found in the plastid. The protein localises to the chloroplast. The enzyme catalyses a uridine in RNA = a pseudouridine in RNA. In Arabidopsis thaliana (Mouse-ear cress), this protein is RNA pseudouridine synthase 2, chloroplastic.